The primary structure comprises 322 residues: Replication factor C small subunit (322 aa).

ATP is bound at residue 45–52; that stretch reads GPPGVGKT.

It belongs to the activator 1 small subunits family. RfcS subfamily. As to quaternary structure, heteromultimer composed of small subunits (RfcS) and large subunits (RfcL).

In terms of biological role, part of the RFC clamp loader complex which loads the PCNA sliding clamp onto DNA. The protein is Replication factor C small subunit of Methanocella arvoryzae (strain DSM 22066 / NBRC 105507 / MRE50).